The primary structure comprises 90 residues: Acylphosphatase (90 aa).

The 88-residue stretch at 3 to 90 folds into the Acylphosphatase-like domain; that stretch reads KKQFVVYGIV…HSFGLFSVEH (88 aa). Residues arginine 18 and asparagine 36 contribute to the active site.

It belongs to the acylphosphatase family.

The catalysed reaction is an acyl phosphate + H2O = a carboxylate + phosphate + H(+). This is Acylphosphatase (acyP) from Mannheimia succiniciproducens (strain KCTC 0769BP / MBEL55E).